We begin with the raw amino-acid sequence, 455 residues long: MQKTYLLALLVSSLASVRSLADQTRLDLGGSFDSTDSADGGSDNVMIQKSEMNEVIASSELLSLHRSLVEIKSISDNEQAVGEFLIDYLDSKNFTVEMQYVDFDDDTGKTIRSPRRFNIFAYPGNNASPGIILTSHIDTVPPFIPYSLSHPASTSLKRDDILISGRGTVDDKASVACQVIAAMDHLEKHPDIPIGLLFVVSEEVGGKGMSTFSNSRLNSGTYHTIIFGEPTEGALVAGHKGMVSFTLRVHGKPAHSGYPWLGRSAVSEIIPILAEVDRLGDIPVSQGGLPSSEKYGRTTLNIGFMSGGVASNVVAEEAVAKVAVRLAAGDPEDAKDIIFRAIRNVATKNRNDATVVLSNGHERPKGDIEIIFGLEAYGVIDLDSDVDGFNVTTVNYGTDVPHWKIYGDNVKRYLYGPGTIFVAHGKNEALTVGEMEAGLEGYKKLVAKAVERERP.

Positions 1–21 (MQKTYLLALLVSSLASVRSLA) are cleaved as a signal peptide. N93 carries an N-linked (GlcNAc...) asparagine glycan. D170 contributes to the Zn(2+) binding site. E202 (proton acceptor) is an active-site residue. Zn(2+) is bound at residue E203. An N-linked (GlcNAc...) asparagine glycan is attached at N390.

Belongs to the peptidase M20A family. Zn(2+) is required as a cofactor.

The protein resides in the secreted. The polypeptide is Probable carboxypeptidase MCYG_07204 (Arthroderma otae (strain ATCC MYA-4605 / CBS 113480) (Microsporum canis)).